Here is a 326-residue protein sequence, read N- to C-terminus: tRNA uridine(34) hydroxylase (326 aa).

Residues 123–217 (SDPEVLLIDT…YLEEVKPEES (95 aa)) enclose the Rhodanese domain. Cysteine 177 functions as the Cysteine persulfide intermediate in the catalytic mechanism. A disordered region spans residues 293-326 (KSRGESHIGSDVKQVIEARRQDKVERKQRQHQEG).

It belongs to the TrhO family.

It carries out the reaction uridine(34) in tRNA + AH2 + O2 = 5-hydroxyuridine(34) in tRNA + A + H2O. In terms of biological role, catalyzes oxygen-dependent 5-hydroxyuridine (ho5U) modification at position 34 in tRNAs. In Shewanella loihica (strain ATCC BAA-1088 / PV-4), this protein is tRNA uridine(34) hydroxylase.